The sequence spans 292 residues: Small ribosomal subunit biogenesis GTPase RsgA (292 aa).

Positions 64-221 constitute a CP-type G domain; it reads RSELFRPAVA…LVDTPGFSSL (158 aa). GTP-binding positions include 113–116 and 164–172; these read NKMD and GPSGVGKST. Zn(2+) contacts are provided by C245, C250, H252, and C258.

It belongs to the TRAFAC class YlqF/YawG GTPase family. RsgA subfamily. As to quaternary structure, monomer. Associates with 30S ribosomal subunit, binds 16S rRNA. The cofactor is Zn(2+).

Its subcellular location is the cytoplasm. In terms of biological role, one of several proteins that assist in the late maturation steps of the functional core of the 30S ribosomal subunit. Helps release RbfA from mature subunits. May play a role in the assembly of ribosomal proteins into the subunit. Circularly permuted GTPase that catalyzes slow GTP hydrolysis, GTPase activity is stimulated by the 30S ribosomal subunit. This is Small ribosomal subunit biogenesis GTPase RsgA from Clostridium botulinum (strain 657 / Type Ba4).